The chain runs to 122 residues: Photosystem II extrinsic protein U (122 aa).

Residues 1–30 form the signal peptide; the sequence is MRWLLSILVRVVLVLCLCFAPLGIPVVARA.

This sequence belongs to the PsbU family. As to quaternary structure, PSII is composed of 1 copy each of membrane proteins PsbA, PsbB, PsbC, PsbD, PsbE, PsbF, PsbH, PsbI, PsbJ, PsbK, PsbL, PsbM, PsbT, PsbX, PsbY, PsbZ, Psb30/Ycf12, peripheral proteins PsbO, CyanoQ (PsbQ), PsbU, PsbV and a large number of cofactors. It forms dimeric complexes.

It localises to the cellular thylakoid membrane. One of the extrinsic, lumenal subunits of photosystem II (PSII). PSII is a light-driven water plastoquinone oxidoreductase, using light energy to abstract electrons from H(2)O, generating a proton gradient subsequently used for ATP formation. The extrinsic proteins stabilize the structure of photosystem II oxygen-evolving complex (OEC), the ion environment of oxygen evolution and protect the OEC against heat-induced inactivation. The polypeptide is Photosystem II extrinsic protein U (Synechococcus sp. (strain JA-2-3B'a(2-13)) (Cyanobacteria bacterium Yellowstone B-Prime)).